A 344-amino-acid polypeptide reads, in one-letter code: Arginine N-succinyltransferase (344 aa).

Residue Leu-125 coordinates succinyl-CoA. The Proton donor role is filled by His-229.

This sequence belongs to the arginine N-succinyltransferase family.

It catalyses the reaction succinyl-CoA + L-arginine = N(2)-succinyl-L-arginine + CoA + H(+). It participates in amino-acid degradation; L-arginine degradation via AST pathway; L-glutamate and succinate from L-arginine: step 1/5. Its function is as follows. Catalyzes the transfer of succinyl-CoA to arginine to produce N(2)-succinylarginine. The sequence is that of Arginine N-succinyltransferase from Salmonella typhi.